The chain runs to 407 residues: Carbamoyl phosphate synthase small chain (407 aa).

Residues 1–203 (MSQNESGTIA…EPCGEYEGKE (203 aa)) form a CPSase region. Residues S61, G255, and G257 each coordinate L-glutamine. A Glutamine amidotransferase type-1 domain is found at 207–405 (TVAAVDLGIK…CELMKNNSKE (199 aa)). The Nucleophile role is filled by C283. The L-glutamine site is built by F284, Q287, N325, G327, and F328. Active-site residues include H378 and E380.

The protein belongs to the CarA family. Composed of two chains; the small (or glutamine) chain promotes the hydrolysis of glutamine to ammonia, which is used by the large (or ammonia) chain to synthesize carbamoyl phosphate. Tetramer of heterodimers (alpha,beta)4.

The catalysed reaction is hydrogencarbonate + L-glutamine + 2 ATP + H2O = carbamoyl phosphate + L-glutamate + 2 ADP + phosphate + 2 H(+). The enzyme catalyses L-glutamine + H2O = L-glutamate + NH4(+). It participates in amino-acid biosynthesis; L-arginine biosynthesis; carbamoyl phosphate from bicarbonate: step 1/1. It functions in the pathway pyrimidine metabolism; UMP biosynthesis via de novo pathway; (S)-dihydroorotate from bicarbonate: step 1/3. Small subunit of the glutamine-dependent carbamoyl phosphate synthetase (CPSase). CPSase catalyzes the formation of carbamoyl phosphate from the ammonia moiety of glutamine, carbonate, and phosphate donated by ATP, constituting the first step of 2 biosynthetic pathways, one leading to arginine and/or urea and the other to pyrimidine nucleotides. The small subunit (glutamine amidotransferase) binds and cleaves glutamine to supply the large subunit with the substrate ammonia. The protein is Carbamoyl phosphate synthase small chain of Bifidobacterium longum (strain DJO10A).